The primary structure comprises 354 residues: Ferrochelatase (354 aa).

2 residues coordinate Fe cation: histidine 214 and glutamate 295.

The protein belongs to the ferrochelatase family.

Its subcellular location is the cytoplasm. It carries out the reaction heme b + 2 H(+) = protoporphyrin IX + Fe(2+). The protein operates within porphyrin-containing compound metabolism; protoheme biosynthesis; protoheme from protoporphyrin-IX: step 1/1. Functionally, catalyzes the ferrous insertion into protoporphyrin IX. This Burkholderia ambifaria (strain MC40-6) protein is Ferrochelatase.